Reading from the N-terminus, the 727-residue chain is Protein EXECUTER 1, chloroplastic (727 aa).

Disordered stretches follow at residues 1–51 (MAAA…SRLF), 65–102 (LAGAAPAPAPRRRVSSVVRCGGGGGGVRSPDDADAGSG), 340–381 (ISSS…LPSD), and 413–455 (DEDD…SGDE). The transit peptide at 1 to 83 (MAAAVSTAPR…PRRRVSSVVR (83 aa)) directs the protein to the chloroplast. 2 stretches are compositionally biased toward low complexity: residues 19–33 (SSSCCSSSSSSASMS) and 42–51 (PSSGSGSRLF). A compositionally biased stretch (acidic residues) spans 413–441 (DEDDENDNPEDEIESSEDIGDGDNVEEAE).

It is found in the plastid. The protein resides in the chloroplast. Its function is as follows. Together with EX2, enables higher plants to perceive singlet oxygen as a stress signal in plastid that activates a genetically determined nuclear stress response program which triggers a programmed cell death (PCD). This transfer of singlet oxygen-induced stress-related signals from the plastid to the nucleus that triggers genetically controlled PCD pathway is unique to photosynthetic eukaryotes and operates under mild stress conditions, impeding photosystem II (PSII) without causing photooxidative damage of the plant. The protein is Protein EXECUTER 1, chloroplastic of Oryza sativa subsp. japonica (Rice).